Consider the following 425-residue polypeptide: Dihydroorotase (425 aa).

Zn(2+) contacts are provided by His-61 and His-63. Substrate is bound by residues 63 to 65 (HLR) and Asn-95. Zn(2+) is bound by residues Asp-153, His-180, and His-233. Asn-279 lines the substrate pocket. Residue Asp-306 coordinates Zn(2+). The active site involves Asp-306. His-310 is a substrate binding site.

This sequence belongs to the metallo-dependent hydrolases superfamily. DHOase family. Class I DHOase subfamily. It depends on Zn(2+) as a cofactor.

It carries out the reaction (S)-dihydroorotate + H2O = N-carbamoyl-L-aspartate + H(+). It functions in the pathway pyrimidine metabolism; UMP biosynthesis via de novo pathway; (S)-dihydroorotate from bicarbonate: step 3/3. Its function is as follows. Catalyzes the reversible cyclization of carbamoyl aspartate to dihydroorotate. This is Dihydroorotase from Trichlorobacter lovleyi (strain ATCC BAA-1151 / DSM 17278 / SZ) (Geobacter lovleyi).